We begin with the raw amino-acid sequence, 28 residues long: Turritoxin F21-2 (28 aa).

As to expression, expressed by the venom duct.

The protein localises to the secreted. Functionally, potent inhibitor of human alpha-3-beta-2 nAChRs (IC(50)=566.2 nM). Irreversibly inhibits the acetylcholine-induced response on human alpha-7/CHRNA7 (55% inhibition at 5.6 uM) and alpha-3-beta-2/CHRNA3-CHRNB2 (91% inhibition) nAChRs. The protein is Turritoxin F21-2 of Polystira nobilis (Sea snail).